The following is a 507-amino-acid chain: ATP synthase subunit alpha, chloroplastic (507 aa).

Position 170–177 (170–177 (GDRQTGKT)) interacts with ATP.

The protein belongs to the ATPase alpha/beta chains family. In terms of assembly, F-type ATPases have 2 components, CF(1) - the catalytic core - and CF(0) - the membrane proton channel. CF(1) has five subunits: alpha(3), beta(3), gamma(1), delta(1), epsilon(1). CF(0) has four main subunits: a, b, b' and c.

It localises to the plastid. Its subcellular location is the chloroplast thylakoid membrane. The catalysed reaction is ATP + H2O + 4 H(+)(in) = ADP + phosphate + 5 H(+)(out). In terms of biological role, produces ATP from ADP in the presence of a proton gradient across the membrane. The alpha chain is a regulatory subunit. This Acorus calamus var. americanus (American sweet flag) protein is ATP synthase subunit alpha, chloroplastic.